A 347-amino-acid polypeptide reads, in one-letter code: FK506-binding protein-like (347 aa).

The disordered stretch occupies residues 1–36 (METSLISPMKENNTAQPQQREENTQQNLNAAVPIKQ). A Phosphothreonine modification is found at T3. 3 TPR repeats span residues 208–241 (AKEE…LLTL), 250–283 (TILH…EPGH), and 284–317 (LKAL…DPKN).

In terms of assembly, forms a ternary complex with CDKN1A/p21 and HSP90AB1/Hsp90.

May be involved in response to X-ray. Regulates p21 protein stability by binding to Hsp90 and p21. In Rattus norvegicus (Rat), this protein is FK506-binding protein-like (Fkbpl).